The chain runs to 876 residues: DNA mismatch repair protein MutS (876 aa).

626–633 contacts ATP; that stretch reads GPNMAGKS. The segment at 829–856 is disordered; the sequence is FRAAPPPPAPAAPPKASQVEERLRAIQP. Over residues 832–841 the composition is skewed to pro residues; the sequence is APPPPAPAAP.

This sequence belongs to the DNA mismatch repair MutS family.

This protein is involved in the repair of mismatches in DNA. It is possible that it carries out the mismatch recognition step. This protein has a weak ATPase activity. This Cereibacter sphaeroides (strain ATCC 17025 / ATH 2.4.3) (Rhodobacter sphaeroides) protein is DNA mismatch repair protein MutS.